A 240-amino-acid polypeptide reads, in one-letter code: Nuclear receptor-interacting protein 3 (240 aa).

The polypeptide is Nuclear receptor-interacting protein 3 (NRIP3) (Pongo abelii (Sumatran orangutan)).